Here is a 63-residue protein sequence, read N- to C-terminus: Overexpressed in colon carcinoma 1 protein homolog (63 aa).

Residues 1–10 (MGCGNSTATS) show a composition bias toward polar residues. Positions 1–39 (MGCGNSTATSAAAGRGPTGAVKDTTEDSITEDDKRRNYG) are disordered.

The protein belongs to the OCC1 family.

The polypeptide is Overexpressed in colon carcinoma 1 protein homolog (Mus musculus (Mouse)).